Consider the following 453-residue polypeptide: Cholecystokinin receptor (453 aa).

The Extracellular segment spans residues 1–64 (MESLRSLSNI…ILDRKKPSPS (64 aa)). N-linked (GlcNAc...) asparagine glycans are attached at residues N9, N22, N30, N35, and N39. The chain crosses the membrane as a helical span at residues 65 to 94 (DLNLWVRIVMYSVIFLLSVFGNTLIIIVLV). At 95–104 (MNKRLRTITN) the chain is on the cytoplasmic side. Residues 105 to 131 (SFLLSLALSDLMVAVLCMPFTLIPNLM) traverse the membrane as a helical segment. Residues 132–142 (ENFIFGEVICR) lie on the Extracellular side of the membrane. A disulfide bridge links C141 with C223. The chain crosses the membrane as a helical span at residues 143-164 (AAAYFMGLSVSVSTFNLVAISI). Residues 165 to 184 (ERYSAICNPLKSRVWQTRSH) lie on the Cytoplasmic side of the membrane. Residues 185–205 (AYRVIAATWVLSSIIMIPYLV) form a helical membrane-spanning segment. Residues 206–237 (YNKTVTFPMKDRRVGHQCRLVWPSKQVQQAWY) are Extracellular-facing. The helical transmembrane segment at 238–261 (VLLLTILFFIPGVVMIVAYGLISR) threads the bilayer. Over 262–343 (ELYRGIQFEM…KLMAKKRVIR (82 aa)) the chain is Cytoplasmic. Residues 344 to 364 (MLIVIVAMFFICWMPIFVANT) traverse the membrane as a helical segment. Residues 365–379 (WKAFDELSAFNTLTG) lie on the Extracellular side of the membrane. Residues 380–403 (APISFIHLLSYTSACVNPLIYCFM) form a helical membrane-spanning segment. A lipid anchor (S-palmitoyl cysteine) is attached at C401. At 404–453 (NKRFRKAFLGTFSSCIKPCRNFRDTDEDIAATGASLSKFSYTTVSSLGPA) the chain is on the cytoplasmic side.

It belongs to the G-protein coupled receptor 1 family. As to expression, brain and stomach.

It is found in the cell membrane. In terms of biological role, receptor for cholecystokinin. This receptor mediates its action by association with G proteins that activate a phosphatidylinositol-calcium second messenger system. Has high affinity for CCK-8 and low affinities for gastrin-17-I, CCK-4, and unsulfated CCK-8. This Xenopus laevis (African clawed frog) protein is Cholecystokinin receptor (cckar).